The following is a 109-amino-acid chain: UPF0102 protein Suden_1901 (109 aa).

It belongs to the UPF0102 family.

This Sulfurimonas denitrificans (strain ATCC 33889 / DSM 1251) (Thiomicrospira denitrificans (strain ATCC 33889 / DSM 1251)) protein is UPF0102 protein Suden_1901.